The following is a 115-amino-acid chain: Cell division topological specificity factor (115 aa).

The segment at 93-115 is disordered; that stretch reads QLKEPKNQSELDSPETEGTDQKS. A compositionally biased stretch (acidic residues) spans 104-115; sequence DSPETEGTDQKS.

The protein belongs to the MinE family.

Functionally, prevents the cell division inhibition by proteins MinC and MinD at internal division sites while permitting inhibition at polar sites. This ensures cell division at the proper site by restricting the formation of a division septum at the midpoint of the long axis of the cell. This is Cell division topological specificity factor from Prochlorococcus marinus (strain NATL1A).